The chain runs to 318 residues: Malate dehydrogenase (318 aa).

NAD(+)-binding positions include 10–15 (GGGQIG) and Asp34. Substrate-binding residues include Arg83 and Arg89. NAD(+)-binding positions include Asn96 and 119 to 121 (ISN). Substrate-binding residues include Asn121 and Arg152. His176 (proton acceptor) is an active-site residue.

This sequence belongs to the LDH/MDH superfamily. MDH type 3 family.

The enzyme catalyses (S)-malate + NAD(+) = oxaloacetate + NADH + H(+). Functionally, catalyzes the reversible oxidation of malate to oxaloacetate. This chain is Malate dehydrogenase, found in Geotalea daltonii (strain DSM 22248 / JCM 15807 / FRC-32) (Geobacter daltonii).